Here is a 953-residue protein sequence, read N- to C-terminus: Eukaryotic translation initiation factor 3 subunit A (953 aa).

Residues 323–504 (LQKMASHVLL…KSISFGLDLH (182 aa)) enclose the PCI domain. Coiled-coil stretches lie at residues 593–642 (QERE…KRQA), 670–704 (MNAD…VDYF), and 732–877 (ENQE…LEER). Residues 603 to 623 (IKKQKVENQEAEQKRLDEERR) form a disordered region. 2 disordered regions span residues 810–861 (ERKK…EIDR) and 893–953 (GWGD…ITMS). 3 stretches are compositionally biased toward basic and acidic residues: residues 812-861 (KKIE…EIDR), 895-919 (GDHE…RGGD), and 928-953 (WQRE…ITMS).

This sequence belongs to the eIF-3 subunit A family. In terms of assembly, component of the eukaryotic translation initiation factor 3 (eIF-3) complex.

It is found in the cytoplasm. Its function is as follows. RNA-binding component of the eukaryotic translation initiation factor 3 (eIF-3) complex, which is involved in protein synthesis of a specialized repertoire of mRNAs and, together with other initiation factors, stimulates binding of mRNA and methionyl-tRNAi to the 40S ribosome. The eIF-3 complex specifically targets and initiates translation of a subset of mRNAs involved in cell proliferation. The polypeptide is Eukaryotic translation initiation factor 3 subunit A (Nematostella vectensis (Starlet sea anemone)).